The following is a 159-amino-acid chain: 6,7-dimethyl-8-ribityllumazine synthase (159 aa).

Residues W30, 64–66 (TFE), and 88–90 (CVI) contribute to the 5-amino-6-(D-ribitylamino)uracil site. 93-94 (ET) contacts (2S)-2-hydroxy-3-oxobutyl phosphate. The active-site Proton donor is H96. 5-amino-6-(D-ribitylamino)uracil is bound at residue F121. Residue R135 coordinates (2S)-2-hydroxy-3-oxobutyl phosphate.

The protein belongs to the DMRL synthase family.

It catalyses the reaction (2S)-2-hydroxy-3-oxobutyl phosphate + 5-amino-6-(D-ribitylamino)uracil = 6,7-dimethyl-8-(1-D-ribityl)lumazine + phosphate + 2 H2O + H(+). The protein operates within cofactor biosynthesis; riboflavin biosynthesis; riboflavin from 2-hydroxy-3-oxobutyl phosphate and 5-amino-6-(D-ribitylamino)uracil: step 1/2. Functionally, catalyzes the formation of 6,7-dimethyl-8-ribityllumazine by condensation of 5-amino-6-(D-ribitylamino)uracil with 3,4-dihydroxy-2-butanone 4-phosphate. This is the penultimate step in the biosynthesis of riboflavin. The chain is 6,7-dimethyl-8-ribityllumazine synthase from Cytophaga hutchinsonii (strain ATCC 33406 / DSM 1761 / CIP 103989 / NBRC 15051 / NCIMB 9469 / D465).